The following is a 339-amino-acid chain: MEPIHNPPPQTCSYSRPSTTYTSFKDASCDTKVTRIIIALFLIVISCGLILCAYTFRDLLDADYLAQEGPQQATKLLQQLDDVLTGPPLPIWDNEHLFQFSCLMQNKHRRVLPIDICNPLTKFNFLECICNCLMTKQSVNVNETDMCELFCPPTCTPENYRRLLCTSSVFPFVMWHDPSADTQEAMLTKMDQTMSSGRVGNSHWVLVIVDIEYRCVTFFDSLCDYVASPQQMREQLEGLAVSLGAIYPKEGGADSDQEELLSPFQVRIGSTVKVQSPGEFTCGAWCCQFLAWYLENPDFDLEEKVPTNPSERRALLADFISTTEQAMSRYSSLSWPTTD.

The helical transmembrane segment at 36 to 56 (IIIALFLIVISCGLILCAYTF) threads the bilayer. Residues histidine 203, aspartate 220, and cysteine 282 contribute to the active site.

This sequence belongs to the peptidase C48 family.

It is found in the secreted. The protein resides in the host cell. It localises to the membrane. Functionally, effector proteins function to alter host cell physiology and promote bacterial survival in host tissues. This protease possesses deubiquitinating and deneddylating activities. The protein is Deubiquitinase and deneddylase Dub2 (cdu2) of Chlamydia trachomatis serovar L2 (strain ATCC VR-902B / DSM 19102 / 434/Bu).